A 428-amino-acid chain; its full sequence is Histidinol dehydrogenase (428 aa).

NAD(+) contacts are provided by tyrosine 124, glutamine 186, and asparagine 209. Substrate-binding residues include serine 233, glutamine 255, and histidine 258. The Zn(2+) site is built by glutamine 255 and histidine 258. Catalysis depends on proton acceptor residues glutamate 322 and histidine 323. Residues histidine 323, aspartate 356, glutamate 410, and histidine 415 each coordinate substrate. Zn(2+) is bound at residue aspartate 356. Histidine 415 is a binding site for Zn(2+).

This sequence belongs to the histidinol dehydrogenase family. Requires Zn(2+) as cofactor.

It catalyses the reaction L-histidinol + 2 NAD(+) + H2O = L-histidine + 2 NADH + 3 H(+). Its pathway is amino-acid biosynthesis; L-histidine biosynthesis; L-histidine from 5-phospho-alpha-D-ribose 1-diphosphate: step 9/9. Functionally, catalyzes the sequential NAD-dependent oxidations of L-histidinol to L-histidinaldehyde and then to L-histidine. The sequence is that of Histidinol dehydrogenase from Bacteroides fragilis (strain YCH46).